The primary structure comprises 318 residues: Methionyl-tRNA formyltransferase (318 aa).

112–115 (SLLP) lines the (6S)-5,6,7,8-tetrahydrofolate pocket.

This sequence belongs to the Fmt family.

The enzyme catalyses L-methionyl-tRNA(fMet) + (6R)-10-formyltetrahydrofolate = N-formyl-L-methionyl-tRNA(fMet) + (6S)-5,6,7,8-tetrahydrofolate + H(+). Functionally, attaches a formyl group to the free amino group of methionyl-tRNA(fMet). The formyl group appears to play a dual role in the initiator identity of N-formylmethionyl-tRNA by promoting its recognition by IF2 and preventing the misappropriation of this tRNA by the elongation apparatus. The polypeptide is Methionyl-tRNA formyltransferase (Citrifermentans bemidjiense (strain ATCC BAA-1014 / DSM 16622 / JCM 12645 / Bem) (Geobacter bemidjiensis)).